We begin with the raw amino-acid sequence, 465 residues long: Ras-like GTPase YcjX (465 aa).

Residues 26–33 (GLSRSGKT) carry the Walker A motif motif. 8 residues coordinate GTP: serine 28, glycine 31, lysine 32, threonine 33, alanine 34, tryptophan 95, threonine 99, and arginine 100. GDP is bound by residues glycine 31, lysine 32, threonine 33, alanine 34, tryptophan 95, and threonine 99. Lysine 249 carries the N6-acetyllysine modification. Residues lysine 338, aspartate 340, histidine 341, and valine 380 each coordinate GTP. Positions 338, 340, 341, and 380 each coordinate GDP.

This sequence to H.influenzae HI_1637. In terms of assembly, monomer in solution. Requires Mg(2+) as cofactor.

It catalyses the reaction GTP + H2O = GDP + phosphate + H(+). Alternates between an inactive form bound to GDP and an active form bound to GTP. Likely activated by a guanine nucleotide-exchange factor (GEF). Functionally, binds GTP and GDP. Has intrinsic GTPase activity. Does not hydrolyze ATP. May act as a transducer of stress responses. In Escherichia coli (strain K12), this protein is Ras-like GTPase YcjX (ycjX).